We begin with the raw amino-acid sequence, 565 residues long: Galactoside 2-alpha-L-fucosyltransferase (565 aa).

The Cytoplasmic segment spans residues 1–43 (MNMLIKRVIAIKNPRGDDNNNNKLSDLETLTDKCTTCPLTLMR). The chain crosses the membrane as a helical; Signal-anchor for type II membrane protein span at residues 44-64 (VMAFFVVSFMLFSVLFSLSVV). Residues 65 to 565 (LRDPPSDAAI…MSWGLKLVDN (501 aa)) lie on the Lumenal side of the membrane. N-linked (GlcNAc...) asparagine glycans are attached at residues asparagine 159, asparagine 263, asparagine 407, and asparagine 509.

Belongs to the glycosyltransferase 37 family.

Its subcellular location is the golgi apparatus. It localises to the golgi stack membrane. It participates in protein modification; protein glycosylation. Involved in cell wall biosynthesis. Adds the terminal fucosyl residue on xyloglucan side chains. This chain is Galactoside 2-alpha-L-fucosyltransferase (FT1), found in Pisum sativum (Garden pea).